The primary structure comprises 192 residues: NF-kappa-B inhibitor-interacting Ras-like protein 1 (192 aa).

Residue 11 to 18 (GLLSVGKT) participates in GTP binding. Residues 35–43 (DCETMEDVY) carry the Effector region motif. The segment at 58–93 (HLYDTRGLQEGVELPKHYFSFADGFVLVYSVNNLES) is interactions with NFKBIA and NFKBIB. GTP contacts are provided by residues 61-65 (DTRGL) and 120-123 (NKID). The tract at residues 168 to 192 (LSQPQSKSSFPLPGRKNKGNSNSEN) is disordered.

Belongs to the small GTPase superfamily. Ras family. KappaB-Ras subfamily. Interacts with both NF-kappa-B inhibitor alpha (NFKBIA) and beta (NFKBIB) in vitro. However, it probably only interacts with NFKBIB in vivo. Forms a complex with NFKBIB and NF-kappa-B heterodimer (p50/NFKB1 and p65/RELA). Also interacts with c-Rel (REL). In terms of tissue distribution, widely expressed.

Its subcellular location is the cytoplasm. Functionally, atypical Ras-like protein that acts as a potent regulator of NF-kappa-B activity by preventing the degradation of NF-kappa-B inhibitor beta (NFKBIB) by most signals, explaining why NFKBIB is more resistant to degradation. May act by blocking phosphorylation of NFKBIB and mediating cytoplasmic retention of p65/RELA NF-kappa-B subunit. It is unclear whether it acts as a GTPase. Both GTP- and GDP-bound forms block phosphorylation of NFKBIB. This is NF-kappa-B inhibitor-interacting Ras-like protein 1 (NKIRAS1) from Homo sapiens (Human).